We begin with the raw amino-acid sequence, 274 residues long: tRNA (guanine-N(7)-)-methyltransferase (274 aa).

Residues 16–40 (ASASRGAATGSRGVAPAVPRGGAPA) are disordered. Residues Glu106, Glu131, Asp158, and Asp181 each coordinate S-adenosyl-L-methionine. Residue Asp181 is part of the active site. Substrate-binding positions include Lys185, Asp217, and 252–255 (TKFE).

It belongs to the class I-like SAM-binding methyltransferase superfamily. TrmB family.

It carries out the reaction guanosine(46) in tRNA + S-adenosyl-L-methionine = N(7)-methylguanosine(46) in tRNA + S-adenosyl-L-homocysteine. It functions in the pathway tRNA modification; N(7)-methylguanine-tRNA biosynthesis. In terms of biological role, catalyzes the formation of N(7)-methylguanine at position 46 (m7G46) in tRNA. The chain is tRNA (guanine-N(7)-)-methyltransferase from Verminephrobacter eiseniae (strain EF01-2).